The chain runs to 678 residues: Glycine--tRNA ligase beta subunit (678 aa).

Belongs to the class-II aminoacyl-tRNA synthetase family. As to quaternary structure, tetramer of two alpha and two beta subunits.

Its subcellular location is the cytoplasm. The enzyme catalyses tRNA(Gly) + glycine + ATP = glycyl-tRNA(Gly) + AMP + diphosphate. The protein is Glycine--tRNA ligase beta subunit of Streptococcus suis (strain 98HAH33).